The chain runs to 262 residues: Mediator of RNA polymerase II transcription subunit 8 (262 aa).

Residues 168-211 (LEEKEMGVKNVITGLKRQLDEGDEEDEEEEEEEEDMQGEEMEVV) adopt a coiled-coil conformation. Positions 183 to 206 (KRQLDEGDEEDEEEEEEEEDMQGE) are disordered. The segment covering 188–206 (EGDEEDEEEEEEEEDMQGE) has biased composition (acidic residues).

This sequence belongs to the Mediator complex subunit 8 family. In terms of assembly, component of the Mediator complex.

The protein resides in the nucleus. Functionally, component of the Mediator complex, a coactivator involved in the regulated transcription of nearly all RNA polymerase II-dependent genes. Mediator functions as a bridge to convey information from gene-specific regulatory proteins to the basal RNA polymerase II transcription machinery. Mediator is recruited to promoters by direct interactions with regulatory proteins and serves as a scaffold for the assembly of a functional preinitiation complex with RNA polymerase II and the general transcription factors. The polypeptide is Mediator of RNA polymerase II transcription subunit 8 (MED8) (Coccidioides immitis (strain RS) (Valley fever fungus)).